The primary structure comprises 194 residues: Methylthioribulose-1-phosphate dehydratase (194 aa).

The Zn(2+) site is built by His84 and His86.

Belongs to the aldolase class II family. MtnB subfamily. Requires Zn(2+) as cofactor.

The enzyme catalyses 5-(methylsulfanyl)-D-ribulose 1-phosphate = 5-methylsulfanyl-2,3-dioxopentyl phosphate + H2O. Its pathway is amino-acid biosynthesis; L-methionine biosynthesis via salvage pathway; L-methionine from S-methyl-5-thio-alpha-D-ribose 1-phosphate: step 2/6. Its function is as follows. Catalyzes the dehydration of methylthioribulose-1-phosphate (MTRu-1-P) into 2,3-diketo-5-methylthiopentyl-1-phosphate (DK-MTP-1-P). In Cronobacter sakazakii (Enterobacter sakazakii), this protein is Methylthioribulose-1-phosphate dehydratase.